We begin with the raw amino-acid sequence, 431 residues long: 3-phosphoshikimate 1-carboxyvinyltransferase (431 aa).

3-phosphoshikimate-binding residues include lysine 26, serine 27, and arginine 31. Position 26 (lysine 26) interacts with phosphoenolpyruvate. 2 residues coordinate phosphoenolpyruvate: glycine 99 and arginine 127. Positions 170, 171, 172, 199, 314, and 343 each coordinate 3-phosphoshikimate. Glutamine 172 contacts phosphoenolpyruvate. Glutamate 314 acts as the Proton acceptor in catalysis. Positions 347, 388, and 413 each coordinate phosphoenolpyruvate.

It belongs to the EPSP synthase family. Monomer.

It localises to the cytoplasm. The catalysed reaction is 3-phosphoshikimate + phosphoenolpyruvate = 5-O-(1-carboxyvinyl)-3-phosphoshikimate + phosphate. Its pathway is metabolic intermediate biosynthesis; chorismate biosynthesis; chorismate from D-erythrose 4-phosphate and phosphoenolpyruvate: step 6/7. In terms of biological role, catalyzes the transfer of the enolpyruvyl moiety of phosphoenolpyruvate (PEP) to the 5-hydroxyl of shikimate-3-phosphate (S3P) to produce enolpyruvyl shikimate-3-phosphate and inorganic phosphate. In Mycobacterium marinum (strain ATCC BAA-535 / M), this protein is 3-phosphoshikimate 1-carboxyvinyltransferase.